Here is a 288-residue protein sequence, read N- to C-terminus: Diaminopimelate epimerase (288 aa).

The substrate site is built by asparagine 14 and asparagine 67. Cysteine 76 functions as the Proton donor in the catalytic mechanism. Substrate contacts are provided by residues 77–78, asparagine 166, asparagine 199, and 217–218; these read GN and ER. The active-site Proton acceptor is cysteine 226. 227-228 serves as a coordination point for substrate; it reads GT.

This sequence belongs to the diaminopimelate epimerase family. In terms of assembly, homodimer.

It localises to the cytoplasm. The catalysed reaction is (2S,6S)-2,6-diaminopimelate = meso-2,6-diaminopimelate. The protein operates within amino-acid biosynthesis; L-lysine biosynthesis via DAP pathway; DL-2,6-diaminopimelate from LL-2,6-diaminopimelate: step 1/1. Functionally, catalyzes the stereoinversion of LL-2,6-diaminopimelate (L,L-DAP) to meso-diaminopimelate (meso-DAP), a precursor of L-lysine and an essential component of the bacterial peptidoglycan. This chain is Diaminopimelate epimerase, found in Bacillus cereus (strain ATCC 10987 / NRS 248).